A 392-amino-acid chain; its full sequence is DNA-directed RNA polymerase subunit Rpo1C (392 aa).

This sequence belongs to the RNA polymerase beta' chain family. Part of the RNA polymerase complex.

It localises to the cytoplasm. The enzyme catalyses RNA(n) + a ribonucleoside 5'-triphosphate = RNA(n+1) + diphosphate. DNA-dependent RNA polymerase (RNAP) catalyzes the transcription of DNA into RNA using the four ribonucleoside triphosphates as substrates. Forms part of the jaw domain. This chain is DNA-directed RNA polymerase subunit Rpo1C, found in Saccharolobus islandicus (strain Y.N.15.51 / Yellowstone #2) (Sulfolobus islandicus).